The following is a 937-amino-acid chain: Periplasmic nitrate reductase (937 aa).

The segment at residues 1-31 (MSMNRREFLKTTAAAAAASAVGISIPSEAKA) is a signal peptide (tat-type signal). The region spanning 40–96 (WQWDKAVCRFCGTGCGIMVAVKDDKIVAVKGDPESPVNRGINCIKGYFNAKIMYGAD) is the 4Fe-4S Mo/W bis-MGD-type domain. Residues Cys-47, Cys-50, Cys-54, and Cys-82 each contribute to the [4Fe-4S] cluster site. Mo-bis(molybdopterin guanine dinucleotide) is bound by residues Lys-84, Gln-152, Asn-177, Cys-181, 214–221 (WGANMAEM), Met-422, Gln-426, Asn-532, Lys-580, Asp-607, and 827–836 (TGRVLEHWHS). A substrate-binding site is contributed by Trp-903. 2 residues coordinate Mo-bis(molybdopterin guanine dinucleotide): Asn-911 and Lys-928.

It belongs to the prokaryotic molybdopterin-containing oxidoreductase family. NasA/NapA/NarB subfamily. As to quaternary structure, component of the periplasmic nitrate reductase NapAB complex composed of NapA and NapB. Requires [4Fe-4S] cluster as cofactor. It depends on Mo-bis(molybdopterin guanine dinucleotide) as a cofactor. Post-translationally, predicted to be exported by the Tat system. The position of the signal peptide cleavage has not been experimentally proven.

Its subcellular location is the periplasm. It carries out the reaction 2 Fe(II)-[cytochrome] + nitrate + 2 H(+) = 2 Fe(III)-[cytochrome] + nitrite + H2O. Its function is as follows. Catalytic subunit of the periplasmic nitrate reductase complex NapAB. Receives electrons from NapB and catalyzes the reduction of nitrate to nitrite. The chain is Periplasmic nitrate reductase from Nautilia profundicola (strain ATCC BAA-1463 / DSM 18972 / AmH).